Reading from the N-terminus, the 625-residue chain is tRNA-guanine(15) transglycosylase (625 aa).

The Nucleophile role is filled by Asp-86. Positions 121 and 184 each coordinate substrate. In terms of domain architecture, PUA spans 546-621; the sequence is GLRVVVDDES…VAVKVHEGVN (76 aa).

This sequence belongs to the archaeosine tRNA-ribosyltransferase family. Zn(2+) serves as cofactor.

It carries out the reaction guanosine(15) in tRNA + 7-cyano-7-deazaguanine = 7-cyano-7-carbaguanosine(15) in tRNA + guanine. Its pathway is tRNA modification; archaeosine-tRNA biosynthesis. In terms of biological role, exchanges the guanine residue with 7-cyano-7-deazaguanine (preQ0) at position 15 in the dihydrouridine loop (D-loop) of archaeal tRNAs. The sequence is that of tRNA-guanine(15) transglycosylase from Picrophilus torridus (strain ATCC 700027 / DSM 9790 / JCM 10055 / NBRC 100828 / KAW 2/3).